Reading from the N-terminus, the 289-residue chain is MDSSMSTKKKTKLSVRNQTCFKKSSLSSSSTAKKTTNLSMREQTMFKKALELSTLCNIDVCVIYYGRDGKLIKTWPDDQSKVRDMAERFSRLHERERCKKRTNLSLFLRKKILDDTKLSEKVLEMEDSLESGLRVLQDKLLLLQPEKNQTEFGQTRAVSSTTNPLSPPPSLIEDHRHQQRTEPLMSGVSNTEQDLSTSSLSQNQSKFSVFLYNHDNCSFYQVPDSVSSFDSLTSTGLLGEQGSGLGSSFDLPMVFPPQMQTQTPLVPFDQFAPWNQAPSFADPMMFPYN.

One can recognise an MADS-box domain in the interval 18–78 (QTCFKKSSLS…GKLIKTWPDD (61 aa)). A disordered region spans residues 151 to 197 (EFGQTRAVSSTTNPLSPPPSLIEDHRHQQRTEPLMSGVSNTEQDLST). The span at 187-197 (GVSNTEQDLST) shows a compositional bias: polar residues.

Expressed in pollen.

The protein resides in the nucleus. In terms of biological role, probable transcription factor. The chain is Agamous-like MADS-box protein AGL93 from Arabidopsis thaliana (Mouse-ear cress).